Here is a 355-residue protein sequence, read N- to C-terminus: Fructose-bisphosphate aldolase, cytoplasmic isozyme (355 aa).

2 residues coordinate substrate: R52 and K142. The Proton acceptor role is filled by E183. Catalysis depends on K225, which acts as the Schiff-base intermediate with dihydroxyacetone-P.

This sequence belongs to the class I fructose-bisphosphate aldolase family.

The protein localises to the cytoplasm. The catalysed reaction is beta-D-fructose 1,6-bisphosphate = D-glyceraldehyde 3-phosphate + dihydroxyacetone phosphate. Its pathway is carbohydrate degradation; glycolysis; D-glyceraldehyde 3-phosphate and glycerone phosphate from D-glucose: step 4/4. This is Fructose-bisphosphate aldolase, cytoplasmic isozyme from Zea mays (Maize).